The sequence spans 460 residues: ATP synthase subunit beta (460 aa).

150–157 is an ATP binding site; that stretch reads GGAGVGKT.

This sequence belongs to the ATPase alpha/beta chains family. In terms of assembly, F-type ATPases have 2 components, CF(1) - the catalytic core - and CF(0) - the membrane proton channel. CF(1) has five subunits: alpha(3), beta(3), gamma(1), delta(1), epsilon(1). CF(0) has three main subunits: a(1), b(2) and c(9-12). The alpha and beta chains form an alternating ring which encloses part of the gamma chain. CF(1) is attached to CF(0) by a central stalk formed by the gamma and epsilon chains, while a peripheral stalk is formed by the delta and b chains.

The protein localises to the cell inner membrane. It catalyses the reaction ATP + H2O + 4 H(+)(in) = ADP + phosphate + 5 H(+)(out). Produces ATP from ADP in the presence of a proton gradient across the membrane. The catalytic sites are hosted primarily by the beta subunits. The polypeptide is ATP synthase subunit beta (Salmonella gallinarum (strain 287/91 / NCTC 13346)).